The following is a 223-amino-acid chain: Ribose-5-phosphate isomerase A (223 aa).

Substrate is bound by residues 32-35, 85-88, and 98-101; these read TGST, DGAD, and KGGG. The active-site Proton acceptor is E107. K125 provides a ligand contact to substrate.

This sequence belongs to the ribose 5-phosphate isomerase family. In terms of assembly, homodimer.

It catalyses the reaction aldehydo-D-ribose 5-phosphate = D-ribulose 5-phosphate. It functions in the pathway carbohydrate degradation; pentose phosphate pathway; D-ribose 5-phosphate from D-ribulose 5-phosphate (non-oxidative stage): step 1/1. Catalyzes the reversible conversion of ribose-5-phosphate to ribulose 5-phosphate. In Pseudomonas syringae pv. syringae (strain B728a), this protein is Ribose-5-phosphate isomerase A.